A 234-amino-acid chain; its full sequence is Ribitol-5-phosphate cytidylyltransferase (234 aa).

CTP contacts are provided by residues 7–10 and 79–85; these read LAGG and GSIVQKS.

It belongs to the IspD/TarI cytidylyltransferase family. TarI subfamily.

The catalysed reaction is D-ribitol 5-phosphate + CTP + H(+) = CDP-L-ribitol + diphosphate. Its pathway is cell wall biogenesis; poly(ribitol phosphate) teichoic acid biosynthesis. Its function is as follows. Catalyzes the transfer of the cytidylyl group of CTP to D-ribitol 5-phosphate. The polypeptide is Ribitol-5-phosphate cytidylyltransferase (Lacticaseibacillus paracasei (strain ATCC 334 / BCRC 17002 / CCUG 31169 / CIP 107868 / KCTC 3260 / NRRL B-441) (Lactobacillus paracasei)).